The following is a 1340-amino-acid chain: Early transcription factor large subunit homolog (1340 aa).

The protein localises to the virion. Functionally, putative initation factor. The chain is Early transcription factor large subunit homolog from Ornithodoros (relapsing fever ticks).